Reading from the N-terminus, the 865-residue chain is AP-1 complex subunit gamma-1 (865 aa).

Residues 665–690 (AEPLETPVDEMTQSPQSSLSRAPSTS) form a disordered region. Over residues 675 to 690 (MTQSPQSSLSRAPSTS) the composition is skewed to polar residues. A GAE domain is found at 746 to 860 (KSYPPIVVFD…LDQVDFGKLP (115 aa)).

The protein belongs to the adaptor complexes large subunit family. Adaptor protein complex 1 (AP-1) is a heterotetramer composed of two large adaptins (gamma-type subunit apl4 and beta-type subunit apl2), a medium adaptin (mu-type subunit apm1) and a small adaptin (sigma-type subunit aps1). AP-1 interacts with clathrin.

The protein resides in the cytoplasmic vesicle. It is found in the clathrin-coated vesicle membrane. Its subcellular location is the golgi apparatus. Its function is as follows. Adaptins are components of the adaptor complexes which link clathrin to receptors in coated vesicles. Clathrin-associated protein complexes are believed to interact with the cytoplasmic tails of membrane proteins, leading to their selection and concentration. The AP-1 complex interacts directly with clathrin. This chain is AP-1 complex subunit gamma-1 (apl4), found in Schizosaccharomyces pombe (strain 972 / ATCC 24843) (Fission yeast).